Consider the following 261-residue polypeptide: Phosphatidylglycerol--prolipoprotein diacylglyceryl transferase (261 aa).

The next 7 helical transmembrane spans lie at Val-19–Tyr-39, Leu-56–Tyr-76, Trp-92–Phe-112, Phe-126–Gly-146, Gln-173–Ala-193, Phe-199–Phe-219, and Gly-227–Ile-247. A 1,2-diacyl-sn-glycero-3-phospho-(1'-sn-glycerol) is bound at residue Arg-139.

This sequence belongs to the Lgt family.

It is found in the cell inner membrane. The catalysed reaction is L-cysteinyl-[prolipoprotein] + a 1,2-diacyl-sn-glycero-3-phospho-(1'-sn-glycerol) = an S-1,2-diacyl-sn-glyceryl-L-cysteinyl-[prolipoprotein] + sn-glycerol 1-phosphate + H(+). It participates in protein modification; lipoprotein biosynthesis (diacylglyceryl transfer). Its function is as follows. Catalyzes the transfer of the diacylglyceryl group from phosphatidylglycerol to the sulfhydryl group of the N-terminal cysteine of a prolipoprotein, the first step in the formation of mature lipoproteins. This Coxiella burnetii (strain Dugway 5J108-111) protein is Phosphatidylglycerol--prolipoprotein diacylglyceryl transferase.